The sequence spans 620 residues: Cilia- and flagella-associated protein 52 (620 aa).

WD repeat units follow at residues 62 to 106, 109 to 150, 156 to 195, 288 to 327, 330 to 369, 372 to 411, 415 to 454, 459 to 498, 500 to 539, 543 to 582, and 585 to 620; these read GHGN…LLAR, LHKG…AICG, LNVGNATNVIFSRCRDEMFMTAGNGTIRVWELDLPNRKIW, QLQGGITSITLRGEGHQFLVGTEESHIYRVSFTDFKETLI, CHFDAVEDIVFPFGTAELFATCAKKDIRVWHTSSNRELLR, VPNMTCHGIDFMRDGKSIISAWNDGKIRAFAPETGRLMYV, AHRIGVTAIATTSDCKRVISGGGEGEVRVWQIGCQTQKLE, EHKSSVSCIRVKRNNEECVTASTDGTCIIWDLVRLRRNQM, LANTLFQCVCYHPEEFQIITSGTDRKIAYWEVFDGTVIRE, SLSGSINGMDITQEGVHFVTGGNDHLVKVWDYNEGEVTHV, and GHSGNITRIRISPGNQYIVSVSADGAILRWKYPYTS.

This sequence belongs to the CFAP52 family. As to quaternary structure, microtubule inner protein component of sperm flagellar doublet microtubules. Interacts with BRCA2. Interacts with the CCT chaperonin complex. Interacts with HSP70. Interacts with AK8. Interacts with CFAP45. Interacts with DNAI1. Interacts with IQDC. As to expression, expressed in respiratory cells and sperm (at protein level). Highly expressed in testis. Up-regulated in hepatocellular carcinoma (HCC).

It localises to the cytoplasm. It is found in the cytoskeleton. The protein localises to the cilium axoneme. Its subcellular location is the flagellum axoneme. Its function is as follows. Microtubule inner protein (MIP) part of the dynein-decorated doublet microtubules (DMTs) in cilia axoneme. Important for proper ciliary and flagellar beating. May act in cooperation with CFAP45 and axonemal dynein subunit DNAH11. May play a role in cell growth and/or survival. This is Cilia- and flagella-associated protein 52 from Homo sapiens (Human).